A 106-amino-acid chain; its full sequence is Urease subunit beta (106 aa).

Belongs to the urease beta subunit family. As to quaternary structure, heterotrimer of UreA (gamma), UreB (beta) and UreC (alpha) subunits. Three heterotrimers associate to form the active enzyme.

Its subcellular location is the cytoplasm. The enzyme catalyses urea + 2 H2O + H(+) = hydrogencarbonate + 2 NH4(+). The protein operates within nitrogen metabolism; urea degradation; CO(2) and NH(3) from urea (urease route): step 1/1. This is Urease subunit beta from Acinetobacter baumannii (strain ATCC 17978 / DSM 105126 / CIP 53.77 / LMG 1025 / NCDC KC755 / 5377).